The following is a 162-amino-acid chain: Cyclic pyranopterin monophosphate synthase (162 aa).

Residues 79–81 (LCH) and 117–118 (ME) contribute to the substrate site. Asp132 is a catalytic residue.

This sequence belongs to the MoaC family. In terms of assembly, homohexamer; trimer of dimers.

It carries out the reaction (8S)-3',8-cyclo-7,8-dihydroguanosine 5'-triphosphate = cyclic pyranopterin phosphate + diphosphate. Its pathway is cofactor biosynthesis; molybdopterin biosynthesis. Catalyzes the conversion of (8S)-3',8-cyclo-7,8-dihydroguanosine 5'-triphosphate to cyclic pyranopterin monophosphate (cPMP). The protein is Cyclic pyranopterin monophosphate synthase of Bordetella petrii (strain ATCC BAA-461 / DSM 12804 / CCUG 43448).